Here is a 337-residue protein sequence, read N- to C-terminus: Phosphate acyltransferase (337 aa).

Belongs to the PlsX family. As to quaternary structure, homodimer. Probably interacts with PlsY.

It is found in the cytoplasm. It catalyses the reaction a fatty acyl-[ACP] + phosphate = an acyl phosphate + holo-[ACP]. It participates in lipid metabolism; phospholipid metabolism. Catalyzes the reversible formation of acyl-phosphate (acyl-PO(4)) from acyl-[acyl-carrier-protein] (acyl-ACP). This enzyme utilizes acyl-ACP as fatty acyl donor, but not acyl-CoA. This Ehrlichia chaffeensis (strain ATCC CRL-10679 / Arkansas) protein is Phosphate acyltransferase.